The chain runs to 156 residues: Large ribosomal subunit protein bL17 (156 aa).

The interval 127–156 is disordered; that stretch reads RATRAAASKKAAEEKAAEAAEEKDEAAEEK. The span at 136–146 shows a compositional bias: basic and acidic residues; the sequence is KAAEEKAAEAA. The span at 147–156 shows a compositional bias: acidic residues; it reads EEKDEAAEEK.

Belongs to the bacterial ribosomal protein bL17 family. Part of the 50S ribosomal subunit. Contacts protein L32.

This chain is Large ribosomal subunit protein bL17, found in Corynebacterium urealyticum (strain ATCC 43042 / DSM 7109).